We begin with the raw amino-acid sequence, 461 residues long: MKKMSLFQNMKSKLLPIAAVSVLTAGIFAGAELQQTEKASAKKQDKAEIRNVIVMIGDGMGTPYIRAYRSMKNNGDTPNNPKLTEFDRNLTGMMMTHPDDPDYNITDSAAAGTALATGVKTYNNAIGVDKNGKKVKSVLEEAKQQGKSTGLVATSEINHATPAAYGAHNESRKNMDQIANSYMDDKIKGKHKIDVLLGGGKSYFNRKDRNLTKEFKQAGYSYVTTKQALKKNKDQQVLGLFADGGLAKALDRDSKTPSLKDMTVSAIDRLNQNKKGFFLMVEGSQIDWAAHDNDTVGAMSEVKDFEQAYKAAIEFAKKDKHTLVIATADHTTGGFTIGANGEKNWHAEPILSAKKTPEFMAKKISEGKPVKDVLARYANLKVTSEEIKSVEAAAQADKSKGASKAIIKIFNTRSNSGWTSTDHTGEEVPVYAYGPGKEKFRGLINNTDQANIIFKILKTGK.

An N-terminal signal peptide occupies residues 1–41; sequence MKKMSLFQNMKSKLLPIAAVSVLTAGIFAGAELQQTEKASA. Asp58 contacts Mg(2+). Zn(2+) is bound at residue Asp58. Ser108 functions as the Phosphoserine intermediate in the catalytic mechanism. Residues Thr161 and Glu282 each contribute to the Mg(2+) site. The Zn(2+) site is built by Asp287, His291, Asp329, His330, and His423.

It belongs to the alkaline phosphatase family. Monomer. Mg(2+) is required as a cofactor. It depends on Zn(2+) as a cofactor.

The enzyme catalyses a phosphate monoester + H2O = an alcohol + phosphate. This Bacillus subtilis (strain 168) protein is Alkaline phosphatase 4 (phoA).